The sequence spans 160 residues: Eukaryotic translation initiation factor 5A (160 aa).

Positions 1–13 (MSDSEEHHFESKA) are enriched in basic and acidic residues. The interval 1-22 (MSDSEEHHFESKADAGASKTYP) is disordered. A Hypusine modification is found at Lys-53.

This sequence belongs to the eIF-5A family. Lys-53 undergoes hypusination, a unique post-translational modification that consists in the addition of a butylamino group from spermidine to lysine side chain, leading to the formation of the unusual amino acid hypusine. eIF-5As are the only known proteins to undergo this modification, which is essential for their function.

Its function is as follows. Translation factor that promotes translation elongation and termination, particularly upon ribosome stalling at specific amino acid sequence contexts. Binds between the exit (E) and peptidyl (P) site of the ribosome and promotes rescue of stalled ribosome: specifically required for efficient translation of polyproline-containing peptides as well as other motifs that stall the ribosome. Acts as a ribosome quality control (RQC) cofactor by joining the RQC complex to facilitate peptidyl transfer during CAT tailing step. This Zea mays (Maize) protein is Eukaryotic translation initiation factor 5A (TIF5A).